Consider the following 363-residue polypeptide: Beta-1,3-N-acetylglucosaminyltransferase lunatic fringe (363 aa).

Over 1–8 (MLKSCGRK) the chain is Cytoplasmic. Residues 9–29 (LLLSLVGSMFTCLLVLMVEPP) form a helical; Signal-anchor for type II membrane protein membrane-spanning segment. The Lumenal portion of the chain corresponds to 30–363 (GRPGLARGEA…TPWCPSNVVY (334 aa)). Arg113 provides a ligand contact to substrate. Residue Asn151 is glycosylated (N-linked (GlcNAc...) asparagine). 2 disulfide bridges follow: Cys152/Cys163 and Cys181/Cys244. Position 185 (Asp185) interacts with substrate. Asp186 provides a ligand contact to Mn(2+). Asp274 is a catalytic residue. Position 298 (His298) interacts with Mn(2+). Cys348 and Cys357 are joined by a disulfide.

It belongs to the glycosyltransferase 31 family. The cofactor is Mn(2+). Requires Co(2+) as cofactor. Post-translationally, a soluble form may be derived from the membrane form by proteolytic processing.

The protein resides in the golgi apparatus membrane. The enzyme catalyses 3-O-(alpha-L-fucosyl)-L-threonyl-[EGF-like domain protein] + UDP-N-acetyl-alpha-D-glucosamine = 3-O-(N-acetyl-beta-D-glucosaminyl-(1-&gt;3)-alpha-L-fucosyl)-L-threonyl-[EGF-like domain protein] + UDP + H(+). The catalysed reaction is 3-O-(alpha-L-fucosyl)-L-seryl-[EGF-like domain protein] + UDP-N-acetyl-alpha-D-glucosamine = 3-O-(N-acetyl-beta-D-glucosaminyl-(1-&gt;3)-alpha-L-fucosyl)-L-seryl-[EGF-like domain protein] + UDP + H(+). Functionally, glycosyltransferase that initiates the elongation of O-linked fucose residues attached to EGF-like repeats in the extracellular domain of Notch molecules. Essential mediator of somite segmentation and patterning. The protein is Beta-1,3-N-acetylglucosaminyltransferase lunatic fringe (LFNG) of Gallus gallus (Chicken).